The primary structure comprises 397 residues: Lysophospholipid transporter LplT (397 aa).

Residues 1–17 are Periplasmic-facing; that stretch reads MSESVHTNTSLWSKGMK. The chain crosses the membrane as a helical span at residues 18 to 38; it reads AVIVAQFLSAFGDNALLFATL. The Cytoplasmic segment spans residues 39-52; that stretch reads ALLKAQFYPEWSQP. Residues 53–73 traverse the membrane as a helical segment; sequence ILQMVFVGAYILFAPFVGQVA. The Periplasmic segment spans residues 74–90; sequence DSFAKGRVMMFANGLKL. The chain crosses the membrane as a helical span at residues 91 to 111; the sequence is LGAASICFGINPFLGYTLVGV. At 112–144 the chain is on the cytoplasmic side; the sequence is GAAAYSPAKYGILGELTTGSKLVKANGLMEAST. A helical transmembrane segment spans residues 145-165; the sequence is IAAILLGSVAGGVLADWHVLV. Ala-166 is a topological domain (periplasmic). Residues 167–187 form a helical membrane-spanning segment; that stretch reads LAACALAYGGAVVANIYIPKL. The Cytoplasmic segment spans residues 188–226; sequence AAARPGQSWNLINMTRSFLNACTSLWCNGETRFSLVGTS. The helical transmembrane segment at 227 to 247 threads the bilayer; the sequence is LFWGAGVTLRFLLVLWVPVAL. Residues 248–256 are Periplasmic-facing; sequence GITDNATPT. The helical transmembrane segment at 257–277 threads the bilayer; the sequence is YLNAMVAIGIVVGAGAAAKLV. The Cytoplasmic portion of the chain corresponds to 278-280; sequence TLE. Residues 281 to 301 form a helical membrane-spanning segment; that stretch reads TVSRCMPAGILIGVVVLIFSL. Residues 302 to 304 lie on the Periplasmic side of the membrane; the sequence is QHE. The chain crosses the membrane as a helical span at residues 305–325; the sequence is LLPAYALLMLIGVLGGFFVVP. Residues 326 to 343 lie on the Cytoplasmic side of the membrane; that stretch reads LNALLQERGKKSVGAGNA. The helical transmembrane segment at 344 to 364 threads the bilayer; the sequence is IAVQNLGENSAMLLMLGIYSL. At 365 to 366 the chain is on the periplasmic side; sequence AV. The chain crosses the membrane as a helical span at residues 367-387; sequence MVGIPVVPIGIGFGALFALAI. The Cytoplasmic segment spans residues 388 to 397; sequence TALWIWQRRH.

It belongs to the major facilitator superfamily. LplT (TC 2.A.1.42) family.

It is found in the cell inner membrane. Functionally, catalyzes the facilitated diffusion of 2-acyl-glycero-3-phosphoethanolamine (2-acyl-GPE) into the cell. The sequence is that of Lysophospholipid transporter LplT from Shigella dysenteriae serotype 1 (strain Sd197).